The following is a 216-amino-acid chain: Imidazole glycerol phosphate synthase subunit HisH (216 aa).

The region spanning 2-216 is the Glutamine amidotransferase type-1 domain; the sequence is RVAIIDYGSG…LIANFLKWKP (215 aa). The Nucleophile role is filled by cysteine 88. Residues histidine 196 and glutamate 198 contribute to the active site.

As to quaternary structure, heterodimer of HisH and HisF.

It localises to the cytoplasm. It catalyses the reaction 5-[(5-phospho-1-deoxy-D-ribulos-1-ylimino)methylamino]-1-(5-phospho-beta-D-ribosyl)imidazole-4-carboxamide + L-glutamine = D-erythro-1-(imidazol-4-yl)glycerol 3-phosphate + 5-amino-1-(5-phospho-beta-D-ribosyl)imidazole-4-carboxamide + L-glutamate + H(+). It carries out the reaction L-glutamine + H2O = L-glutamate + NH4(+). It functions in the pathway amino-acid biosynthesis; L-histidine biosynthesis; L-histidine from 5-phospho-alpha-D-ribose 1-diphosphate: step 5/9. Functionally, IGPS catalyzes the conversion of PRFAR and glutamine to IGP, AICAR and glutamate. The HisH subunit catalyzes the hydrolysis of glutamine to glutamate and ammonia as part of the synthesis of IGP and AICAR. The resulting ammonia molecule is channeled to the active site of HisF. The sequence is that of Imidazole glycerol phosphate synthase subunit HisH from Brucella suis biovar 1 (strain 1330).